We begin with the raw amino-acid sequence, 190 residues long: Ribosome hibernation promotion factor (190 aa).

Belongs to the HPF/YfiA ribosome-associated protein family. Long HPF subfamily. As to quaternary structure, interacts with 100S ribosomes.

Its subcellular location is the cytoplasm. In terms of biological role, required for dimerization of active 70S ribosomes into 100S ribosomes in stationary phase; 100S ribosomes are translationally inactive and sometimes present during exponential growth. This is Ribosome hibernation promotion factor from Staphylococcus aureus (strain COL).